Reading from the N-terminus, the 316-residue chain is N-acetylmuramic acid 6-phosphate etherase (316 aa).

Positions 68-231 (ITDRLRSGGR…STCAMVRLGK (164 aa)) constitute an SIS domain. The Proton donor role is filled by E96. The active site involves E127.

It belongs to the GCKR-like family. MurNAc-6-P etherase subfamily. As to quaternary structure, homodimer.

It catalyses the reaction N-acetyl-D-muramate 6-phosphate + H2O = N-acetyl-D-glucosamine 6-phosphate + (R)-lactate. It participates in amino-sugar metabolism; N-acetylmuramate degradation. In terms of biological role, specifically catalyzes the cleavage of the D-lactyl ether substituent of MurNAc 6-phosphate, producing GlcNAc 6-phosphate and D-lactate. The protein is N-acetylmuramic acid 6-phosphate etherase of Prochlorococcus marinus (strain MIT 9303).